The sequence spans 228 residues: Urease accessory protein UreG (228 aa).

34–41 (GPVGSGKT) serves as a coordination point for GTP.

This sequence belongs to the SIMIBI class G3E GTPase family. UreG subfamily. As to quaternary structure, homodimer. UreD, UreF and UreG form a complex that acts as a GTP-hydrolysis-dependent molecular chaperone, activating the urease apoprotein by helping to assemble the nickel containing metallocenter of UreC. The UreE protein probably delivers the nickel.

The protein resides in the cytoplasm. Its function is as follows. Facilitates the functional incorporation of the urease nickel metallocenter. This process requires GTP hydrolysis, probably effectuated by UreG. This Rhodococcus opacus (strain B4) protein is Urease accessory protein UreG.